A 384-amino-acid polypeptide reads, in one-letter code: UDP-galactopyranose mutase (384 aa).

A signal peptide spans 1–23 (MKSKKILIVGAGFSGAVIGRQLA). FAD-binding positions include Ser14, 33–34 (DQ), Asn41, and 60–61 (HI). The UDP-alpha-D-galactose site is built by Asn84, Phe151, Thr156, Trp160, and Tyr185. Phe219 contributes to the FAD binding site. Residues Asn270, Arg280, and Tyr314 each contribute to the UDP-alpha-D-galactose site. Arg343 serves as a coordination point for FAD. Residue Tyr349 coordinates UDP-alpha-D-galactose. 350–355 (LDMDVT) serves as a coordination point for FAD.

Belongs to the UDP-galactopyranose/dTDP-fucopyranose mutase family. As to quaternary structure, homodimer. The cofactor is FAD.

It carries out the reaction UDP-alpha-D-galactose = UDP-alpha-D-galactofuranose. Its pathway is bacterial outer membrane biogenesis; LPS O-antigen biosynthesis. Involved in the biosynthesis of the galactose-containing O-side-chain polysaccharide backbone structure of D-galactan I which is a key component of lipopolysaccharide (LPS). Catalyzes the interconversion through a 2-keto intermediate of uridine diphosphogalactopyranose (UDP-GalP) into uridine diphosphogalactofuranose (UDP-GalF) which is the biosynthetic precursor of galactofuranosyl residues. The sequence is that of UDP-galactopyranose mutase (rfbD) from Klebsiella pneumoniae.